Reading from the N-terminus, the 462-residue chain is Tubulin gamma-1 chain (462 aa).

A GTP-binding site is contributed by 142 to 148 (AGGTGSG).

It belongs to the tubulin family.

It is found in the cytoplasm. Its subcellular location is the cytoskeleton. It localises to the microtubule organizing center. The protein resides in the centrosome. Tubulin is the major constituent of microtubules. The gamma chain is found at microtubule organizing centers (MTOC) such as the spindle poles or the centrosome, suggesting that it is involved in the minus-end nucleation of microtubule assembly. The protein is Tubulin gamma-1 chain of Euplotes crassus.